The chain runs to 215 residues: Eukaryotic translation initiation factor 4E (215 aa).

The disordered stretch occupies residues 1–27; sequence MAERDSEPRVNIIRPDDEPEVEEERVP. Phosphoserine; by PKC is present on S207.

Belongs to the eukaryotic initiation factor 4E family. In terms of assembly, eIF4F is a multi-subunit complex, the composition of which varies with external and internal environmental conditions. It is composed of at least eIF4A, eIF4E and eIF4G. eIF4E is also known to interact with other partners. Post-translationally, phosphorylation increases the ability of the protein to bind to mRNA caps and to form the eIF4F complex.

Its function is as follows. Recognizes and binds the 7-methylguanosine-containing mRNA cap during an early step in the initiation of protein synthesis and facilitates ribosome binding by inducing the unwinding of the mRNAs secondary structures. The sequence is that of Eukaryotic translation initiation factor 4E from Aplysia californica (California sea hare).